The primary structure comprises 317 residues: Ubiquinone biosynthesis protein COQ9, mitochondrial (317 aa).

Residues 1–46 (MAASVARVLKAAGGRQLLLMVARRRPVLRQPFLLMPRKFWGTSALR) constitute a mitochondrion transit peptide. The tract at residues 45–97 (LRSEDQKQPPFSSTSAHAGTPEHAEEQYQQQQPPPRYTDQAGEESEGYESEEQ) is disordered. Over residues 85–96 (AGEESEGYESEE) the composition is skewed to acidic residues. Arg-243 is a binding site for a 1,2-diacylglycero-3-phosphoethanolamine.

It belongs to the COQ9 family. As to quaternary structure, homodimer. Heterodimer; two heterodimers of COQ7:COQ9 come together on the same side of the lipid pseudo-bilayer and form a curved tetramer with a hydrophobic surface suitable for membrane interaction. These two tetramers assemble into a soluble octamer with a pseudo-bilayer of lipids captured within. Interacts with COQ7; this interaction allows ubiquinone (CoQ) isoprene intermediates presentation to COQ7 and facilitates the COQ7-mediated hydroxylase step.

The protein localises to the mitochondrion. Its pathway is cofactor biosynthesis; ubiquinone biosynthesis. Its function is as follows. Membrane-associated protein that warps the membrane surface to access and bind aromatic isoprenes with high specificity, including ubiquinone (CoQ) isoprene intermediates and presents them directly to COQ7, therefore facilitating the COQ7-mediated hydroxylase step. Participates in the biosynthesis of coenzyme Q, also named ubiquinone, an essential lipid-soluble electron transporter for aerobic cellular respiration. This chain is Ubiquinone biosynthesis protein COQ9, mitochondrial, found in Xenopus tropicalis (Western clawed frog).